Reading from the N-terminus, the 199-residue chain is Transgelin-3 (199 aa).

The region spanning 24–136 is the Calponin-homology (CH) domain; the sequence is ADLENKLVDW…RTLMALGSVA (113 aa). S163 bears the Phosphoserine mark. One copy of the Calponin-like repeat lies at 174–199; that stretch reads IGLQMGSNKGASQAGMTGYGMPRQIM. Over residues 176-188 the composition is skewed to polar residues; sequence LQMGSNKGASQAG. The disordered stretch occupies residues 176–199; that stretch reads LQMGSNKGASQAGMTGYGMPRQIM.

This sequence belongs to the calponin family. As to expression, widely expressed in the brain. Expression is increased in the superior frontal cortex of alcoholics, but not in the motor cortex or cerebellum.

The protein is Transgelin-3 (TAGLN3) of Homo sapiens (Human).